Reading from the N-terminus, the 320-residue chain is Ribosomal large subunit pseudouridine synthase D (320 aa).

The region spanning 18–90 (QRLDQIAAQL…IELEIVYEDE (73 aa)) is the S4 RNA-binding domain. The active site involves D138.

It belongs to the pseudouridine synthase RluA family.

It localises to the cytoplasm. The catalysed reaction is uridine(1911/1915/1917) in 23S rRNA = pseudouridine(1911/1915/1917) in 23S rRNA. Functionally, responsible for synthesis of pseudouridine from uracil at positions 1911, 1915 and 1917 in 23S ribosomal RNA. The polypeptide is Ribosomal large subunit pseudouridine synthase D (rluD) (Pseudomonas aeruginosa (strain ATCC 15692 / DSM 22644 / CIP 104116 / JCM 14847 / LMG 12228 / 1C / PRS 101 / PAO1)).